Here is a 72-residue protein sequence, read N- to C-terminus: Translation initiation factor IF-1 (72 aa).

The region spanning 1–72 (MAKSDVIEVE…SKGRITYRFK (72 aa)) is the S1-like domain.

It belongs to the IF-1 family. As to quaternary structure, component of the 30S ribosomal translation pre-initiation complex which assembles on the 30S ribosome in the order IF-2 and IF-3, IF-1 and N-formylmethionyl-tRNA(fMet); mRNA recruitment can occur at any time during PIC assembly.

Its subcellular location is the cytoplasm. In terms of biological role, one of the essential components for the initiation of protein synthesis. Stabilizes the binding of IF-2 and IF-3 on the 30S subunit to which N-formylmethionyl-tRNA(fMet) subsequently binds. Helps modulate mRNA selection, yielding the 30S pre-initiation complex (PIC). Upon addition of the 50S ribosomal subunit IF-1, IF-2 and IF-3 are released leaving the mature 70S translation initiation complex. This is Translation initiation factor IF-1 from Levilactobacillus brevis (strain ATCC 367 / BCRC 12310 / CIP 105137 / JCM 1170 / LMG 11437 / NCIMB 947 / NCTC 947) (Lactobacillus brevis).